Reading from the N-terminus, the 828-residue chain is DNA gyrase subunit A (828 aa).

Residues 32 to 497 form the Topo IIA-type catalytic domain; the sequence is LPDVRDGLKP…EVLSLEDEDL (466 aa). Y120 (O-(5'-phospho-DNA)-tyrosine intermediate) is an active-site residue. The short motif at 524-530 is the GyrA-box element; the sequence is QKRGGRG.

This sequence belongs to the type II topoisomerase GyrA/ParC subunit family. As to quaternary structure, heterotetramer, composed of two GyrA and two GyrB chains. In the heterotetramer, GyrA contains the active site tyrosine that forms a transient covalent intermediate with DNA, while GyrB binds cofactors and catalyzes ATP hydrolysis.

The protein resides in the cytoplasm. The catalysed reaction is ATP-dependent breakage, passage and rejoining of double-stranded DNA.. A type II topoisomerase that negatively supercoils closed circular double-stranded (ds) DNA in an ATP-dependent manner to modulate DNA topology and maintain chromosomes in an underwound state. Negative supercoiling favors strand separation, and DNA replication, transcription, recombination and repair, all of which involve strand separation. Also able to catalyze the interconversion of other topological isomers of dsDNA rings, including catenanes and knotted rings. Type II topoisomerases break and join 2 DNA strands simultaneously in an ATP-dependent manner. The polypeptide is DNA gyrase subunit A (Streptococcus pyogenes serotype M1).